The sequence spans 680 residues: GTPase Obg (680 aa).

An Obg domain is found at 2 to 160 (DQFIDVVSFE…LNIRLEVKLI (159 aa)). The OBG-type G domain occupies 161-336 (ADIGLVGMPN…LDGDMLDKVT (176 aa)). Residues 167–174 (GMPNTGKS), 192–196 (FTTLT), 214–217 (DIPG), 281–284 (NKTD), and 317–319 (PEI) contribute to the GTP site. 2 residues coordinate Mg(2+): S174 and T194. Positions 371-680 (TKRVFGPVVS…NGVLSYAVNI (310 aa)) are radical SAM domain. The Radical SAM core domain maps to 383–613 (LGNSLGIDVI…IEIDVPSVSD (231 aa)). Residues C397, C401, and C404 each contribute to the [4Fe-4S] cluster site.

This sequence belongs to the TRAFAC class OBG-HflX-like GTPase superfamily. OBG GTPase family. As to quaternary structure, monomer. Mg(2+) is required as a cofactor. Requires [4Fe-4S] cluster as cofactor.

The protein resides in the cytoplasm. In terms of biological role, an essential GTPase which binds GTP, GDP and possibly (p)ppGpp with moderate affinity, with high nucleotide exchange rates and a fairly low GTP hydrolysis rate. Plays a role in control of the cell cycle, stress response, ribosome biogenesis and in those bacteria that undergo differentiation, in morphogenesis control. In Brachyspira hyodysenteriae (strain ATCC 49526 / WA1), this protein is GTPase Obg.